The primary structure comprises 213 residues: Orotate phosphoribosyltransferase (213 aa).

Lysine 26 lines the 5-phospho-alpha-D-ribose 1-diphosphate pocket. An orotate-binding site is contributed by 34–35 (FF). 5-phospho-alpha-D-ribose 1-diphosphate contacts are provided by residues 72–73 (YK), arginine 99, lysine 100, lysine 103, histidine 105, and 124–132 (DDVITAGTA). Orotate contacts are provided by threonine 128 and arginine 156.

Belongs to the purine/pyrimidine phosphoribosyltransferase family. PyrE subfamily. As to quaternary structure, homodimer. It depends on Mg(2+) as a cofactor.

It carries out the reaction orotidine 5'-phosphate + diphosphate = orotate + 5-phospho-alpha-D-ribose 1-diphosphate. It functions in the pathway pyrimidine metabolism; UMP biosynthesis via de novo pathway; UMP from orotate: step 1/2. Functionally, catalyzes the transfer of a ribosyl phosphate group from 5-phosphoribose 1-diphosphate to orotate, leading to the formation of orotidine monophosphate (OMP). The protein is Orotate phosphoribosyltransferase of Vibrio atlanticus (strain LGP32) (Vibrio splendidus (strain Mel32)).